The following is a 301-amino-acid chain: D-alanine--D-alanine ligase (301 aa).

Residues 99 to 293 (KRILAFGNVR…FEELLDTIIE (195 aa)) enclose the ATP-grasp domain. ATP is bound at residue 126–181 (IENLGYPVFIKPNNGGSSVATTLVESKEAVKDAVLEALKYDTEVMIEEYIKGDEIT). Positions 248, 260, and 262 each coordinate Mg(2+).

Belongs to the D-alanine--D-alanine ligase family. The cofactor is Mg(2+). Mn(2+) is required as a cofactor.

It is found in the cytoplasm. The enzyme catalyses 2 D-alanine + ATP = D-alanyl-D-alanine + ADP + phosphate + H(+). The protein operates within cell wall biogenesis; peptidoglycan biosynthesis. Cell wall formation. This chain is D-alanine--D-alanine ligase, found in Clostridium perfringens (strain SM101 / Type A).